The chain runs to 208 residues: MARYRGPVEKLERRFGVSLALKGERRLAGKSALDKRPYAPGQHGARKGKISEYGLQLREKQKAKFMYGVSEKQFRRLFAEAARREGNTGVLLIQLLEQRLDNVVYRMGFATTRRFARQLVTHGHILVNGKRVDIPSFRVEAGAKIEIIEKSKNNPQITRAIELTAQTGIVAWVDVEKDKRFGIFTRKPEREEVVIPVEERFIVELYSK.

In terms of domain architecture, S4 RNA-binding spans 98 to 163 (QRLDNVVYRM…NPQITRAIEL (66 aa)).

This sequence belongs to the universal ribosomal protein uS4 family. Part of the 30S ribosomal subunit. Contacts protein S5. The interaction surface between S4 and S5 is involved in control of translational fidelity.

In terms of biological role, one of the primary rRNA binding proteins, it binds directly to 16S rRNA where it nucleates assembly of the body of the 30S subunit. Functionally, with S5 and S12 plays an important role in translational accuracy. The protein is Small ribosomal subunit protein uS4 of Campylobacter jejuni (strain RM1221).